The sequence spans 1253 residues: Structural polyprotein (1253 aa).

A host transcription inhibition region spans residues 37–71; it reads FQAQQMQQLISAVNALTMRQNAIAPARPPKPKKKK. Residues 58 to 109 form a disordered region; the sequence is AIAPARPPKPKKKKTTKPKPKTQPKKINGKTQQQKKKDKQADKKKKKPGKRE. The short motif at 64–105 is the Nuclear localization signal element; that stretch reads PPKPKKKKTTKPKPKTQPKKINGKTQQQKKKDKQADKKKKKP. Over residues 65–107 the composition is skewed to basic residues; the sequence is PKPKKKKTTKPKPKTQPKKINGKTQQQKKKDKQADKKKKKPGK. A binding to the viral RNA region spans residues 87–120; that stretch reads KTQQQKKKDKQADKKKKKPGKRERMCMKIENDCI. Positions 105–119 are ribosome-binding; that stretch reads PGKRERMCMKIENDC. Cysteine 119 and cysteine 134 are joined by a disulfide. The Peptidase S3 domain occupies 119-267; it reads CIFEVKHEGK…RVTPEGSEEW (149 aa). Residue histidine 145 is the Charge relay system of the active site. The Nuclear export signal motif lies at 150 to 160; the sequence is IDNADLAKLAF. The interval 161–166 is interaction with spike glycoprotein E2; it reads KKSSKY. Aspartate 167 acts as the Charge relay system in catalysis. The segment at 189–199 is dimerization of the capsid protein; that stretch reads PEGHYNWHHGA. The Charge relay system role is filled by serine 219. The segment at 225 to 229 is dimerization of the capsid protein; it reads DNKGR. The Extracellular portion of the chain corresponds to 268 to 701; sequence SAPLITAMCV…YGLYPAATVS (434 aa). Disulfide bonds link cysteine 276/cysteine 285, cysteine 290/cysteine 294, and cysteine 293/cysteine 325. N-linked (GlcNAc...) asparagine; by host glycosylation occurs at asparagine 280. A glycan (N-linked (GlcNAc...) asparagine; by host) is linked at asparagine 327. Cystine bridges form between cysteine 352–cysteine 458, cysteine 355–cysteine 361, cysteine 424–cysteine 438, cysteine 486–cysteine 598, cysteine 534–cysteine 558, and cysteine 536–cysteine 553. A glycan (N-linked (GlcNAc...) asparagine; by host) is linked at asparagine 533. Asparagine 595 carries an N-linked (GlcNAc...) asparagine; by host glycan. A helical transmembrane segment spans residues 702–722; the sequence is AVVGMSLLALISIFASCYMLV. Cysteine 718 carries the S-stearoyl cysteine; by host lipid modification. Residues 723–727 form an interaction with the capsid protein region; that stretch reads AARSK. The Cytoplasmic portion of the chain corresponds to 723–755; sequence AARSKCLTPYALTPGAAVPWTLGILCCAPRAHA. Residue cysteine 728 is the site of S-stearoyl cysteine; by host attachment. The segment at 728–748 is transient transmembrane before p62-6K protein processing; that stretch reads CLTPYALTPGAAVPWTLGILC. Cysteine 728 and cysteine 749 are disulfide-bonded. 2 S-palmitoyl cysteine; by host lipidation sites follow: cysteine 748 and cysteine 749. The Extracellular portion of the chain corresponds to 756-770; it reads ASVAETMAYLWDQNQ. The chain crosses the membrane as a helical span at residues 771–791; it reads ALFWLEFAAPVACILIITYCL. Arginine 792 is a topological domain (cytoplasmic). A helical membrane pass occupies residues 793-813; sequence NVLCCCKSLSFLVLLSLGATA. The Extracellular portion of the chain corresponds to 814-1230; the sequence is RAYEHSTVMP…ALSWVQKISG (417 aa). 4 disulfide bridges follow: cysteine 864/cysteine 929, cysteine 877/cysteine 909, cysteine 878/cysteine 911, and cysteine 883/cysteine 893. The tract at residues 899-916 is E1 fusion peptide loop; it reads VYPFMWGGAYCFCDSENT. N-linked (GlcNAc...) asparagine; by host glycans are attached at residues asparagine 956 and asparagine 1085. 4 disulfide bridges follow: cysteine 1074-cysteine 1086, cysteine 1116-cysteine 1191, cysteine 1121-cysteine 1195, and cysteine 1143-cysteine 1185. An E1-DIII; interaction with host receptor VLDLR region spans residues 1112–1192; it reads IDLTCTVATC…SLCSARATCS (81 aa). Residues 1231–1251 form a helical membrane-spanning segment; that stretch reads GLGAFAIGAILVLVVVTCIGL. Cysteine 1248 carries S-stearoyl cysteine; by host lipidation. Residues 1252 to 1253 lie on the Cytoplasmic side of the membrane; sequence RR.

Homodimer. Homomultimer. Interacts with host karyopherin KPNA4; this interaction allows the nuclear import of the viral capsid protein. Interacts with spike glycoprotein E2. Interacts with host IRAK1; the interaction leads to inhibition of IRAK1-dependent signaling. In terms of assembly, the precursor of protein E3/E2 and E1 form a heterodimer shortly after synthesis. As to quaternary structure, the precursor of protein E3/E2 and E1 form a heterodimer shortly after synthesis. Processing of the precursor of protein E3/E2 into E2 and E3 results in a heterodimer of the spike glycoproteins E2 and E1. Spike at virion surface are constituted of a trimer of E2-E1 heterodimers. E2-E1 heterodimers interact with host VLDLR or LRP8/APOER2 to mediate viral entry. After target cell attachment and endocytosis, E1 change conformation to form homotrimers. Interacts with 6K protein. Interacts (via E1-DIII) with host VLDLR (via class A repeats); this interaction mediates viral entry into host cell. Interacts with spike glycoprotein E1. Processing of the precursor of protein E3/E2 into E2 and E3 results in a heterodimer of the spike glycoproteins E2 and E1. Spike at virion surface are constituted of a trimer of E2-E1 heterodimers. E2-E1 heterodimers interact with host VLDLR or LRP8/APOER2 to mediate viral entry. Interacts with 6K protein. In terms of assembly, oligomer. Interacts with spike glycoprotein E1. Interacts with spike glycoprotein E2. In terms of processing, specific enzymatic cleavages in vivo yield mature proteins. Capsid protein is auto-cleaved during polyprotein translation, unmasking a signal peptide at the N-terminus of the precursor of E3/E2. The remaining polyprotein is then targeted to the host endoplasmic reticulum, where host signal peptidase cleaves it into pE2, 6K and E1 proteins. pE2 is further processed to mature E3 and E2 by host furin in trans-Golgi vesicle. Protein processing process takes about 30 minutes at physiologic temperatures. The folding of the p62/6K/E1 precursor requires the formation of intrachain disulfide bonds and has been shown to involve a transient covalent interaction between the nascent and newly synthesized heterodimer and the host-cell chaperones, P4HB/PDI and PDIA3/ERp57. The folding pathway also includes non covalent interaction with human CANX/calnexin and CALR/calreticulin. Post-translationally, palmitoylated via thioester bonds. These palmitoylations may induce disruption of the C-terminus transmembrane. This would result in the reorientation of E2 C-terminus from lumenal to cytoplasmic side. Envelope E1, E2 and E3 proteins are N-glycosylated. In terms of processing, stearoylated. Post-translationally, palmitoylated via thioester bonds with about four covalently bound fatty acids per molecule.

The protein localises to the virion. Its subcellular location is the host cytoplasm. The protein resides in the host cell membrane. It localises to the host nucleus. It is found in the virion membrane. The protein localises to the host Golgi apparatus. Its subcellular location is the host trans-Golgi network. The protein resides in the host endoplasmic reticulum. It carries out the reaction Autocatalytic release of the core protein from the N-terminus of the togavirus structural polyprotein by hydrolysis of a -Trp-|-Ser- bond.. Its function is as follows. Forms an icosahedral capsid with a T=4 symmetry composed of 240 copies of the capsid protein surrounded by a lipid membrane through which penetrate 80 spikes composed of trimers of E1-E2 heterodimers. The capsid protein binds to the viral RNA genome at a site adjacent to a ribosome binding site for viral genome translation following genome release. Possesses a protease activity that results in its autocatalytic cleavage from the nascent structural protein. Following its self-cleavage, the capsid protein transiently associates with ribosomes, and within several minutes the protein binds to viral RNA and rapidly assembles into icosahedric core particles. The resulting nucleocapsid eventually associates with the cytoplasmic domain of the spike glycoprotein E2 at the cell membrane, leading to budding and formation of mature virions. In case of infection, new virions attach to target cells and after clathrin-mediated endocytosis their membrane fuses with the host endosomal membrane. This leads to the release of the nucleocapsid into the cytoplasm, followed by an uncoating event necessary for the genomic RNA to become accessible. The uncoating might be triggered by the interaction of capsid proteins with ribosomes. Binding of ribosomes would release the genomic RNA since the same region is genomic RNA-binding and ribosome-binding. Specifically inhibits interleukin-1 receptor-associated kinase 1/IRAK1-dependent signaling during viral entry, representing a means by which the alphaviruses may evade innate immune detection and activation prior to viral gene expression. Functionally, provides the signal sequence for the translocation of the precursor of protein E3/E2 to the host endoplasmic reticulum. Furin-cleaved E3 remains associated with spike glycoprotein E1 and mediates pH protection of the latter during the transport via the secretory pathway. After virion release from the host cell, the assembly protein E3 is gradually released in the extracellular space. Plays a role in viral attachment to target host cell, by binding to the cell receptors VLDLR or LRP8/APOER2. The host LDLR can act as a cell receptor for viral entry. Synthesized as a p62 precursor which is processed by furin at the cell membrane just before virion budding, giving rise to E2-E1 heterodimer. The p62-E1 heterodimer is stable, whereas E2-E1 is unstable and dissociate at low pH. p62 is processed at the last step, presumably to avoid E1 fusion activation before its final export to cell surface. E2 C-terminus contains a transitory transmembrane that would be disrupted by palmitoylation, resulting in reorientation of the C-terminal tail from lumenal to cytoplasmic side. This step is critical since E2 C-terminus is involved in budding by interacting with capsid proteins. This release of E2 C-terminus in cytoplasm occurs lately in protein export, and precludes premature assembly of particles at the endoplasmic reticulum membrane. In terms of biological role, acts as a viroporin that participates in virus glycoprotein processing and transport to the plasma membrane, cell permeabilization and budding of viral particles. Disrupts the calcium homeostasis of the cell, probably at the endoplasmic reticulum level. This leads to cytoplasmic calcium elevation. Because of its lipophilic properties, the 6K protein is postulated to influence the selection of lipids that interact with the transmembrane domains of the glycoproteins, which, in turn, affects the deformability of the bilayer required for the extreme curvature that occurs as budding proceeds. Present in low amount in virions, about 3% compared to viral glycoproteins. Its function is as follows. Class II viral fusion protein. Fusion activity is inactive as long as E1 is bound to E2 in mature virion. After virus attachment to target cell via host VLDLR or LRP8/APOER2 and endocytosis, acidification of the endosome induces dissociation of E1/E2 heterodimer and concomitant trimerization of the E1 subunits. This E1 trimer is fusion active, and promotes release of viral nucleocapsid in cytoplasm after endosome and viral membrane fusion. Efficient fusion requires the presence of cholesterol and sphingolipid in the target membrane. Fusion is optimal at levels of about 1 molecule of cholesterol per 2 molecules of phospholipids, and is specific for sterols containing a 3-beta-hydroxyl group. The sequence is that of Structural polyprotein from Aedes (Middle-African hedgehog).